The sequence spans 62 residues: Mu-elapitoxin-Na1a (62 aa).

Intrachain disulfides connect cysteine 3/cysteine 22, cysteine 15/cysteine 40, cysteine 44/cysteine 55, and cysteine 56/cysteine 61.

It belongs to the three-finger toxin family. Short-chain subfamily. Orphan group XV sub-subfamily. As to expression, expressed by the venom gland.

It localises to the secreted. Its function is as follows. Potent inhibitor of human Nav1.8/SCN10A (IC(50)=141-380 nM). Is highly selective for this channel and acts in a reversible manner. Shows a depolarizing shift of activation and hyperpolarizing shift of inactivation. In contrast to the very similar cytotoxin A5 (AC P62375), does not seem to bind integrin alpha-V/beta-3, since it does not promote or inhibit the proliferation of HUVECs and C-PAE cells. In vivo, in rodent models of inflammatory and neuropathic pain, it alleviates nociceptive behaviors more potently than does morphine. It displays no evident cytotoxic, hemolytic and cardiotoxic activities and produces no obvious adverse responses in mice even at a dose 30-fold higher than that producing a significant analgesic effect. In Naja atra (Chinese cobra), this protein is Mu-elapitoxin-Na1a.